Consider the following 264-residue polypeptide: SPRY domain-containing SOCS box protein 2 (264 aa).

A compositionally biased stretch (polar residues) spans 1-18; it reads MGQTALARGSSSTPSSHA. The segment at 1-53 is disordered; the sequence is MGQTALARGSSSTPSSHALYSDLSPPEGLEELLSAPPPDLGAQRHHGWNPKDC. Over residues 21–34 the composition is skewed to low complexity; the sequence is SDLSPPEGLEELLS. The B30.2/SPRY domain occupies 26–221; that stretch reads PEGLEELLSA…VRIRYLGERR (196 aa). In terms of domain architecture, SOCS box spans 222–264; that stretch reads AEEPQSLLHLSRLCVRHALGDTRLGQISSLPLPPAMKRYLLYK.

Belongs to the SPSB family. As to quaternary structure, component of the probable ECS(SPSB2) E3 ubiquitin-protein ligase complex which contains CUL5, RNF7/RBX2, Elongin BC complex and SPSB2. Interacts with CUL5, RNF7, ELOB and ELOC. Interacts with MET. Interacts (via B30.2/SPRY domain) with PAWR; this interaction occurs in association with the Elongin BC complex. Interacts with NOS2.

It is found in the cytoplasm. Its subcellular location is the cytosol. It participates in protein modification; protein ubiquitination. Its function is as follows. Substrate recognition component of a SCF-like ECS (Elongin BC-CUL2/5-SOCS-box protein) E3 ubiquitin-protein ligase complex which mediates the ubiquitination and subsequent proteasomal degradation of target proteins. Negatively regulates nitric oxide (NO) production and limits cellular toxicity in activated macrophages by mediating the ubiquitination and proteasomal degradation of NOS2. Acts as a bridge which links NOS2 with the ECS E3 ubiquitin ligase complex components ELOC and CUL5. This Rattus norvegicus (Rat) protein is SPRY domain-containing SOCS box protein 2 (Spsb2).